Here is a 307-residue protein sequence, read N- to C-terminus: Methionyl-tRNA formyltransferase (307 aa).

S108–P111 is a (6S)-5,6,7,8-tetrahydrofolate binding site.

This sequence belongs to the Fmt family.

The enzyme catalyses L-methionyl-tRNA(fMet) + (6R)-10-formyltetrahydrofolate = N-formyl-L-methionyl-tRNA(fMet) + (6S)-5,6,7,8-tetrahydrofolate + H(+). Its function is as follows. Attaches a formyl group to the free amino group of methionyl-tRNA(fMet). The formyl group appears to play a dual role in the initiator identity of N-formylmethionyl-tRNA by promoting its recognition by IF2 and preventing the misappropriation of this tRNA by the elongation apparatus. This is Methionyl-tRNA formyltransferase from Xylella fastidiosa (strain M23).